The chain runs to 549 residues: Lysine-specific demethylase JMJ31 (549 aa).

Positions 125–296 constitute a JmjC domain; the sequence is DYRPGQIYLA…SNMPEHMDSY (172 aa). H184, D186, and H266 together coordinate Fe cation.

The protein belongs to the JARID1 histone demethylase family. The cofactor is Fe(2+). As to expression, mostly expressed in leaves and inflorescences, and, to a lower extent, in roots, siliques and stems.

The protein localises to the nucleus. May function as histone H3 lysine demethylase and be involved in regulation of gene expression. This Arabidopsis thaliana (Mouse-ear cress) protein is Lysine-specific demethylase JMJ31.